Here is a 217-residue protein sequence, read N- to C-terminus: Somatotropin (217 aa).

A signal peptide spans methionine 1–alanine 27. Position 46 (histidine 46) interacts with Zn(2+). A disulfide bond links cysteine 79 and cysteine 190. Serine 132 carries the phosphoserine modification. A Zn(2+)-binding site is contributed by glutamate 199. An intrachain disulfide couples cysteine 207 to cysteine 215.

The protein belongs to the somatotropin/prolactin family.

The protein localises to the secreted. Functionally, plays an important role in growth control. Its major role in stimulating body growth is to stimulate the liver and other tissues to secrete IGF1. It stimulates both the differentiation and proliferation of myoblasts. It also stimulates amino acid uptake and protein synthesis in muscle and other tissues. This is Somatotropin (GH1) from Capra hircus (Goat).